We begin with the raw amino-acid sequence, 63 residues long: UPF0337 protein RA1131 (63 aa).

The interval 1 to 63 is disordered; it reads MGSAKDKVAG…DAVKGAVDKT (63 aa). Over residues 34 to 49 the composition is skewed to low complexity; that stretch reads AKGAAQEAKGGAQQAK. Residues 51–63 show a composition bias toward basic and acidic residues; that stretch reads KLKDAVKGAVDKT.

Belongs to the UPF0337 (CsbD) family.

This chain is UPF0337 protein RA1131, found in Rhizobium meliloti (strain 1021) (Ensifer meliloti).